The following is a 67-amino-acid chain: Large ribosomal subunit protein uL30 (67 aa).

Belongs to the universal ribosomal protein uL30 family. Part of the 50S ribosomal subunit.

The chain is Large ribosomal subunit protein uL30 from Sinorhizobium medicae (strain WSM419) (Ensifer medicae).